Reading from the N-terminus, the 688-residue chain is Lipase (688 aa).

The signal sequence occupies residues 1 to 35 (MKTRQNKYSIRKFSVGASSILIAALLFMGGGSAQA). Positions 31-309 (GSAQAAEQQQ…KSAKQKQYKN (279 aa)) are disordered. Positions 36-302 (AEQQQDKGTV…KNEDQTNKSA (267 aa)) are cleaved as a propeptide — removed in mature form. Residues 45–54 (VENSTTQSIG) are compositionally biased toward polar residues. Over residues 68–79 (NKNVNEKSNVNS) the composition is skewed to low complexity. 2 stretches are compositionally biased toward basic and acidic residues: residues 84–95 (ESLHNETPKNED) and 103–143 (SQND…KHAS). Polar residues predominate over residues 144–172 (ENNQTLHSKAAQSNEDVKTKPSQLDNTAA). A compositionally biased stretch (basic and acidic residues) spans 173-183 (KQEDSQKENLS). The segment covering 184–211 (KQDTQSSKTTDLLRATAQNQSKDSQSTE) has biased composition (polar residues). The span at 240–267 (SKEEPLKVDKQANPTTDKDKSSKNDKGS) shows a compositional bias: basic and acidic residues. A compositionally biased stretch (polar residues) spans 274 to 289 (LESNAVATTNKQSKQQ). The active-site Nucleophile is Ser-418. The active-site Charge relay system is the Asp-609. Residue Asp-647 coordinates Ca(2+). His-648 (charge relay system) is an active-site residue. Positions 650, 655, and 658 each coordinate Ca(2+).

It belongs to the AB hydrolase superfamily. Lipase family.

Its subcellular location is the secreted. The enzyme catalyses a triacylglycerol + H2O = a diacylglycerol + a fatty acid + H(+). The polypeptide is Lipase (lip) (Staphylococcus epidermidis (strain ATCC 12228 / FDA PCI 1200)).